We begin with the raw amino-acid sequence, 178 residues long: Transcription termination/antitermination protein NusG (178 aa).

One can recognise a KOW domain in the interval 126–156 (VGQQVRVNEGPFADFNGVVEEVNYERNKLRV).

The protein belongs to the NusG family.

Functionally, participates in transcription elongation, termination and antitermination. In Neisseria meningitidis serogroup B (strain ATCC BAA-335 / MC58), this protein is Transcription termination/antitermination protein NusG.